The chain runs to 259 residues: MRDRRGSLGTCLAQVQQARGGDSNKLSYSLKKRMPMEGLWPADAPSWMNKPVVDGNSQSEALSLEMRKDPSGAGPWLHGGGPVLPYVKESVRRNPASAATRSTAVGLLPAPTECFAQVACSGVEALERDWLGGGARATDGHRGQCPKGEPRVSRLLCHQKLPEMGSFQDDPPNALPKGLGSELEPSCLHSVLSATLHACPEVLLNDETKRVFLDRLKPMFSKQTMEFKKMLKNTSDGLQITLGLLALQPFELANSLCHS.

Interacts with transcriptional activator STAT3; the interaction occurs in both the nucleus and the cytoplasm, is enhanced by IL6 and promotes STAT3 dephosphorylation, leading to negative regulation of STAT3 transcriptional activator activity. Can interact with both unphosphorylated and phosphorylated STAT3 but interacts preferentially with phosphorylated STAT3 in the nucleus. Interacts with protein phosphatase PTPN2/TC45; this promotes interaction of PTPN2 with STAT3, leading to dephosphorylation of STAT3 by PTPN2.

It is found in the nucleus. It localises to the cytoplasm. The protein localises to the cytoplasmic vesicle. Its subcellular location is the secretory vesicle. The protein resides in the acrosome. Promotes dephosphorylation of transcriptional activator STAT3 by interacting with both STAT3 and protein phosphatase PTPN2. This promotes interaction of PTPN2 with STAT3 and mediates STAT3 dephosphorylation by PTPN2, leading to negative regulation of STAT3 transcriptional activator activity. May be required for spermiogenesis or sperm function. The chain is Protein FAM220A (FAM220A) from Macaca fascicularis (Crab-eating macaque).